The following is a 446-amino-acid chain: Glutamine synthetase (446 aa).

The GS beta-grasp domain occupies 18–103 (ENVRYLRLQF…LICDVYKTDG (86 aa)). Positions 110–446 (PRANLKRVLK…WERDQYMKQY (337 aa)) constitute a GS catalytic domain. Residues Glu134 and Glu136 each contribute to the Mg(2+) site. Glu186 lines the ATP pocket. Residues Glu191 and Glu198 each contribute to the Mg(2+) site. L-glutamate is bound by residues 242–243 (NG) and Gly243. His247 is a Mg(2+) binding site. An ATP-binding site is contributed by Ser251. 3 residues coordinate L-glutamate: Arg300, Glu306, and Arg318. ATP-binding residues include Arg318 and Arg323. Glu335 contacts Mg(2+). Arg337 lines the L-glutamate pocket.

It belongs to the glutamine synthetase family. Oligomer of 12 subunits arranged in the form of two hexagons. In its feedback-inhibited form, interacts with TnrA in order to block its DNA-binding activity. The cofactor is Mg(2+).

Its subcellular location is the cytoplasm. It carries out the reaction L-glutamate + NH4(+) + ATP = L-glutamine + ADP + phosphate + H(+). Its activity is regulated as follows. Inhibited by glutamine. In terms of biological role, glutamine synthetase (GS) is an unusual multitasking protein that functions as an enzyme, a transcription coregulator, and a chaperone in ammonium assimilation and in the regulation of genes involved in nitrogen metabolism. It catalyzes the ATP-dependent biosynthesis of glutamine from glutamate and ammonia. Feedback-inhibited GlnA also interacts with and regulates the activity of the transcriptional regulator TnrA. During nitrogen limitation, TnrA is in its DNA-binding active state and turns on the transcription of genes required for nitrogen assimilation. Under conditions of nitrogen excess, feedback-inhibited GlnA forms a stable complex with TnrA, which inhibits its DNA-binding activity. In contrast, feedback-inhibited GlnA acts as a chaperone to stabilize the DNA-binding activity of GlnR, which represses the transcription of nitrogen assimilation genes. This chain is Glutamine synthetase, found in Staphylococcus aureus (strain MSSA476).